We begin with the raw amino-acid sequence, 270 residues long: Energy-coupling factor transporter transmembrane protein EcfT (270 aa).

The next 4 helical transmembrane spans lie at Leu-36–Ile-56, Pro-72–Asn-92, Leu-108–Leu-128, and Phe-248–Trp-268.

The protein belongs to the energy-coupling factor EcfT family. In terms of assembly, forms a stable energy-coupling factor (ECF) transporter complex composed of 2 membrane-embedded substrate-binding proteins (S component), 2 ATP-binding proteins (A component) and 2 transmembrane proteins (T component). May be able to interact with more than 1 S component at a time.

Its subcellular location is the cell membrane. Transmembrane (T) component of an energy-coupling factor (ECF) ABC-transporter complex. Unlike classic ABC transporters this ECF transporter provides the energy necessary to transport a number of different substrates. The sequence is that of Energy-coupling factor transporter transmembrane protein EcfT from Clostridium kluyveri (strain ATCC 8527 / DSM 555 / NBRC 12016 / NCIMB 10680 / K1).